The sequence spans 165 residues: Cytochrome c-type biogenesis protein CcmE (165 aa).

At 1–29 the chain is on the cytoplasmic side; it reads MSATAEDNARGAKPAGNFARTVSQRKRKR. The helical; Signal-anchor for type II membrane protein transmembrane segment at 30 to 50 threads the bilayer; it reads LFLIGGALAVLAVAVGLMLMA. The Periplasmic segment spans residues 51–165; sequence FSQDIRFFRT…LKEKGVWEGK (115 aa). Positions 143 and 147 each coordinate heme.

Belongs to the CcmE/CycJ family.

Its subcellular location is the cell inner membrane. In terms of biological role, heme chaperone required for the biogenesis of c-type cytochromes. Transiently binds heme delivered by CcmC and transfers the heme to apo-cytochromes in a process facilitated by CcmF and CcmH. In Brucella anthropi (strain ATCC 49188 / DSM 6882 / CCUG 24695 / JCM 21032 / LMG 3331 / NBRC 15819 / NCTC 12168 / Alc 37) (Ochrobactrum anthropi), this protein is Cytochrome c-type biogenesis protein CcmE.